We begin with the raw amino-acid sequence, 266 residues long: Derlin-1 (266 aa).

The Cytoplasmic portion of the chain corresponds to Met-1 to Thr-20. The helical transmembrane segment at Leu-21 to Leu-41 threads the bilayer. Over Ile-42–Leu-55 the chain is Lumenal. The helical transmembrane segment at Ile-56 to Ile-76 threads the bilayer. The Cytoplasmic segment spans residues Ala-77 to Asp-94. The helical transmembrane segment at Phe-95 to Phe-115 threads the bilayer. Residues Trp-116 to Trp-156 lie on the Lumenal side of the membrane. Residues Ala-157–Ile-177 form a helical membrane-spanning segment. The Cytoplasmic segment spans residues Ala-178–Asp-266. The segment at Gly-235–Asp-266 is disordered.

This sequence belongs to the derlin family.

The protein resides in the endoplasmic reticulum membrane. In terms of biological role, may be involved in the degradation process of specific misfolded endoplasmic reticulum (ER) luminal proteins. The sequence is that of Derlin-1 (DER1) from Arabidopsis thaliana (Mouse-ear cress).